Consider the following 366-residue polypeptide: Peptide chain release factor 1 (366 aa).

Residue Gln239 is modified to N5-methylglutamine.

This sequence belongs to the prokaryotic/mitochondrial release factor family. Methylated by PrmC. Methylation increases the termination efficiency of RF1.

The protein localises to the cytoplasm. Its function is as follows. Peptide chain release factor 1 directs the termination of translation in response to the peptide chain termination codons UAG and UAA. The chain is Peptide chain release factor 1 from Baumannia cicadellinicola subsp. Homalodisca coagulata.